The sequence spans 71 residues: Translational regulator CsrA (71 aa).

It belongs to the CsrA/RsmA family. In terms of assembly, homodimer; the beta-strands of each monomer intercalate to form a hydrophobic core, while the alpha-helices form wings that extend away from the core.

The protein resides in the cytoplasm. A translational regulator that binds mRNA to regulate translation initiation and/or mRNA stability. Usually binds in the 5'-UTR at or near the Shine-Dalgarno sequence preventing ribosome-binding, thus repressing translation. Its main target seems to be the major flagellin gene, while its function is anatagonized by FliW. The chain is Translational regulator CsrA from Clostridium botulinum (strain Alaska E43 / Type E3).